Reading from the N-terminus, the 358-residue chain is CCAAT/enhancer-binding protein alpha (358 aa).

Residues 1–55 form a disordered region; sequence MESADFYEAEPRPPMSSHLQSPPHAPSNAAFGFPRGAGPAPPPAPPAAPEPLGGI. The segment at 1–70 is required to repress E2F1:TFDP1-mediated transcription, to inhibit cell cycle and to induce adipocyte differentiation; it reads MESADFYEAE…SIDISAYIDP (70 aa). Low complexity predominate over residues 29–38; the sequence is AAFGFPRGAG. Over residues 39–49 the composition is skewed to pro residues; the sequence is PAPPPAPPAAP. The tract at residues 54–72 is required for interaction with TRIB1; sequence GICEHETSIDISAYIDPAA. The segment at 126–200 is required to induce adipocyte differentiation; it reads PPGYGCAAAG…HASPAHLAAP (75 aa). N6-acetyllysine; alternate is present on Lys-159. Residue Lys-159 forms a Glycyl lysine isopeptide (Lys-Gly) (interchain with G-Cter in SUMO); alternate linkage. Residue Lys-159 forms a Glycyl lysine isopeptide (Lys-Gly) (interchain with G-Cter in SUMO2); alternate linkage. Disordered stretches follow at residues 176–195 and 213–310; these read LFPY…ASPA and TMHL…NVET. Over residues 179-191 the composition is skewed to pro residues; it reads YQPPPPPPPPHPH. The interval 180-194 is required to functionally cooperate with SREBF1 in promoter activation; sequence QPPPPPPPPHPHASP. Ser-193 is subject to Phosphoserine. The segment covering 220–234 has biased composition (pro residues); the sequence is HPTPPPTPVPSPHPA. Thr-222 and Thr-226 each carry phosphothreonine; by GSK3. The residue at position 230 (Ser-230) is a Phosphoserine; by GSK3. Positions 240–358 are interaction with FOXO1; the sequence is AGLPGPGGSL…SLVKAMGNCA (119 aa). The span at 261 to 271 shows a compositional bias: gly residues; that stretch reads TGGGGGGGAGA. Over residues 276 to 292 the composition is skewed to basic and acidic residues; sequence KSVDKNSNEYRVRRERN. In terms of domain architecture, bZIP spans 282-345; sequence SNEYRVRRER…DTLRGIFRQL (64 aa). A DNA-binding region spans residues 285–300; sequence YRVRRERNNIAVRKSR. Residues 286–313 are basic motif; the sequence is RVRRERNNIAVRKSRDKAKQRNVETQQK. Positions 317-345 are leucine-zipper; sequence LTSDNDRLRKRVEQLSRELDTLRGIFRQL.

It belongs to the bZIP family. C/EBP subfamily. In terms of assembly, binds DNA as a homodimer and as a heterodimer. Can form stable heterodimers with CEBPB, CEBPD, CEBPE and CEBPG. Can form stable homodimers (also isoform 2 and isoform 3 dimers) and heterodimers with CEBPB (with isoform 2 and isoform 3) and CEBPG. Interacts with PRDM16. Interacts with UBN1. Interacts with ZNF638; this interaction increases transcriptional activation. Interacts with the complex TFDP2:E2F1; the interaction prevents CEBPA binding to target gene promoters and represses its transcriptional activity. Interacts with RB1. Interacts (when phosphorylated at Ser-193) with CDK2, CDK4, E2F4 and SMARCA2. Interacts with SREBPF1. Interacts with FOXO1 (via the Fork-head domain); the interaction increases when FOXO1 is deacetylated. Interacts with SIX1. Interacts (via recognition sequence) with TRIB1. Interacts with TAF1A and UBTF. As to quaternary structure, interacts with NPM1. Post-translationally, sumoylated, sumoylation blocks the inhibitory effect on cell proliferation by disrupting the interaction with SMARCA2. Phosphorylation at Ser-193 is required for interaction with CDK2, CDK4 and SWI/SNF complex leading to cell cycle inhibition. Dephosphorylated at Ser-193 by protein phosphatase 2A (PP2A) through PI3K/AKT signaling pathway regulation. Phosphorylation at Thr-222 and Thr-226 by GSK3 is constitutive in adipose tissue and lung. In liver, both Thr-222 and Thr-226 are phosphorylated only during feeding but not during fasting. Phosphorylation of the GSK3 consensus sites selectively decreases transactivation activity on IRE-controlled promoters. In terms of processing, ubiquitinated by COP1 upon interaction with TRIB1. As to expression, isoform 2 and isoform 3 are expressed in liver (at protein level).

It localises to the nucleus. It is found in the nucleolus. Functionally, transcription factor that coordinates proliferation arrest and the differentiation of myeloid progenitors, adipocytes, hepatocytes, and cells of the lung and the placenta. Binds directly to the consensus DNA sequence 5'-T[TG]NNGNAA[TG]-3' acting as an activator on distinct target genes. During early embryogenesis, plays essential and redundant functions with CEBPB. Essential for the transition from common myeloid progenitors (CMP) to granulocyte/monocyte progenitors (GMP). Critical for the proper development of the liver and the lung. Necessary for terminal adipocyte differentiation, is required for postnatal maintenance of systemic energy homeostasis and lipid storage. To regulate these different processes at the proper moment and tissue, interplays with other transcription factors and modulators. Down-regulates the expression of genes that maintain cells in an undifferentiated and proliferative state through E2F1 repression, which is critical for its ability to induce adipocyte and granulocyte terminal differentiation. Reciprocally E2F1 blocks adipocyte differentiation by binding to specific promoters and repressing CEBPA binding to its target gene promoters. Proliferation arrest also depends on a functional binding to SWI/SNF complex. In liver, regulates gluconeogenesis and lipogenesis through different mechanisms. To regulate gluconeogenesis, functionally cooperates with FOXO1 binding to IRE-controlled promoters and regulating the expression of target genes such as PCK1 or G6PC1. To modulate lipogenesis, interacts and transcriptionally synergizes with SREBF1 in promoter activation of specific lipogenic target genes such as ACAS2. In adipose tissue, seems to act as FOXO1 coactivator accessing to ADIPOQ promoter through FOXO1 binding sites. In terms of biological role, can act as dominant-negative. Binds DNA and have transctivation activity, even if much less efficiently than isoform 2. Does not inhibit cell proliferation. Directly and specifically enhances ribosomal DNA transcription interacting with RNA polymerase I-specific cofactors and inducing histone acetylation. This chain is CCAAT/enhancer-binding protein alpha, found in Rattus norvegicus (Rat).